An 87-amino-acid chain; its full sequence is DNA-directed RNA polymerase subunit omega (87 aa).

It belongs to the RNA polymerase subunit omega family. As to quaternary structure, the RNAP catalytic core consists of 2 alpha, 1 beta, 1 beta' and 1 omega subunit. When a sigma factor is associated with the core the holoenzyme is formed, which can initiate transcription.

The catalysed reaction is RNA(n) + a ribonucleoside 5'-triphosphate = RNA(n+1) + diphosphate. Its function is as follows. Promotes RNA polymerase assembly. Latches the N- and C-terminal regions of the beta' subunit thereby facilitating its interaction with the beta and alpha subunits. The sequence is that of DNA-directed RNA polymerase subunit omega from Thioalkalivibrio sulfidiphilus (strain HL-EbGR7).